A 120-amino-acid polypeptide reads, in one-letter code: UPF0715 membrane protein YwlA (120 aa).

4 helical membrane-spanning segments follow: residues 3 to 23 (YNYT…VIYI), 26 to 46 (FIIA…LIFA), 63 to 83 (LYLL…FGML), and 95 to 115 (AFYL…SVLL).

The protein belongs to the UPF0715 family.

The protein localises to the cell membrane. This is UPF0715 membrane protein YwlA (ywlA) from Bacillus subtilis (strain 168).